The chain runs to 872 residues: Alanine--tRNA ligase (872 aa).

Zn(2+)-binding residues include histidine 571, histidine 575, cysteine 674, and histidine 678.

The protein belongs to the class-II aminoacyl-tRNA synthetase family. Zn(2+) serves as cofactor.

The protein localises to the cytoplasm. It catalyses the reaction tRNA(Ala) + L-alanine + ATP = L-alanyl-tRNA(Ala) + AMP + diphosphate. Its function is as follows. Catalyzes the attachment of alanine to tRNA(Ala) in a two-step reaction: alanine is first activated by ATP to form Ala-AMP and then transferred to the acceptor end of tRNA(Ala). Also edits incorrectly charged Ser-tRNA(Ala) and Gly-tRNA(Ala) via its editing domain. The chain is Alanine--tRNA ligase from Symbiobacterium thermophilum (strain DSM 24528 / JCM 14929 / IAM 14863 / T).